The chain runs to 734 residues: Adhesion G protein-coupled receptor E5 (734 aa).

Residues methionine 1–serine 26 form the signal peptide. Residues glutamine 27 to threonine 449 are Extracellular-facing. The 43-residue stretch at asparagine 28–aspartate 70 folds into the EGF-like 1 domain. Disulfide bonds link cysteine 32–cysteine 42, cysteine 36–cysteine 48, cysteine 50–cysteine 69, cysteine 75–cysteine 89, cysteine 83–cysteine 98, cysteine 100–cysteine 121, cysteine 127–cysteine 140, cysteine 134–cysteine 149, and cysteine 151–cysteine 170. Asparagine 39 and asparagine 44 each carry an N-linked (GlcNAc...) asparagine glycan. Residues aspartate 71 to arginine 122 enclose the EGF-like 2; calcium-binding domain. Asparagine 115 and asparagine 136 each carry an N-linked (GlcNAc...) asparagine glycan. One can recognise an EGF-like 3; calcium-binding domain in the interval aspartate 123–lysine 171. The GAIN-B domain occupies threonine 265–glutamate 441. 5 N-linked (GlcNAc...) asparagine glycosylation sites follow: asparagine 285, asparagine 327, asparagine 372, asparagine 403, and asparagine 418. 2 disulfide bridges follow: cysteine 393–cysteine 423 and cysteine 411–cysteine 425. Residues cysteine 393–glutamate 441 form a GPS region. Residues lysine 450–valine 470 form a helical membrane-spanning segment. Residues arginine 471–threonine 478 are Cytoplasmic-facing. Residues threonine 479–isoleucine 499 form a helical membrane-spanning segment. Over glutamate 500–tyrosine 519 the chain is Extracellular. Residues cysteine 520–valine 540 form a helical membrane-spanning segment. The Cytoplasmic segment spans residues arginine 541–lysine 550. The helical transmembrane segment at leucine 551–alanine 571 threads the bilayer. The Extracellular portion of the chain corresponds to tyrosine 572–serine 593. The helical transmembrane segment at phenylalanine 594–tryptophan 614 threads the bilayer. Over lysine 615–threonine 637 the chain is Cytoplasmic. A helical transmembrane segment spans residues isoleucine 638 to phenylalanine 658. At asparagine 659–serine 662 the chain is on the extracellular side. A helical transmembrane segment spans residues tryptophan 663 to leucine 683. Residues tyrosine 684–methionine 734 lie on the Cytoplasmic side of the membrane. The disordered stretch occupies residues threonine 712–methionine 734. Phosphothreonine is present on threonine 713. Serine 715 bears the Phosphoserine mark. Phosphothreonine is present on threonine 724. Phosphoserine occurs at positions 730 and 732.

Belongs to the G-protein coupled receptor 2 family. LN-TM7 subfamily. As to quaternary structure, forms a heterodimer, consisting of a large extracellular region (alpha subunit) non-covalently linked to a seven-transmembrane moiety (beta subunit). Interacts with complement decay-accelerating factor (DAF) and with chondroitin sulfate. Proteolytically cleaved into 2 subunits, an extracellular alpha subunit and a seven-transmembrane subunit.

The protein localises to the cell membrane. It localises to the secreted. The protein resides in the extracellular space. Its function is as follows. Receptor potentially involved in both adhesion and signaling processes early after leukocyte activation. Plays an essential role in leukocyte migration. The polypeptide is Adhesion G protein-coupled receptor E5 (Bos taurus (Bovine)).